The following is a 470-amino-acid chain: Histidine--tRNA ligase (470 aa).

The protein belongs to the class-II aminoacyl-tRNA synthetase family. In terms of assembly, homodimer.

The protein localises to the cytoplasm. The catalysed reaction is tRNA(His) + L-histidine + ATP = L-histidyl-tRNA(His) + AMP + diphosphate + H(+). This chain is Histidine--tRNA ligase, found in Xanthomonas oryzae pv. oryzae (strain PXO99A).